A 563-amino-acid chain; its full sequence is Zinc finger CCHC domain-containing protein 7 (563 aa).

Disordered regions lie at residues Ser41 to Ala64 and Ser133 to Ser157. A compositionally biased stretch (polar residues) spans Ser133–Pro142. The span at Gln143–Ser157 shows a compositional bias: low complexity. 5 CCHC-type zinc fingers span residues Val265–Val282, Pro287–Ser304, Arg305–Glu322, Lys328–Glu345, and Val372–Glu389. Positions Lys443 to Asp494 are disordered. Positions Pro449–Arg463 are enriched in basic residues. Basic and acidic residues predominate over residues Lys464–Lys476. The span at Gln477–Ser486 shows a compositional bias: basic residues.

As to quaternary structure, component of a nucleolar TRAMP-like complex, an ATP-dependent exosome regulatory complex consisting of a helicase (MTREX), an oligadenylate polymerase (PAPD5 or PAPD7), and a substrate specific RNA-binding factor (ZCCHC7 or ZCCHC8). Several TRAMP-like complexes exist with specific compositions and are associated with nuclear, or nucleolar RNA exosomes.

It localises to the nucleus. Its subcellular location is the nucleolus. This chain is Zinc finger CCHC domain-containing protein 7 (zcchc7), found in Xenopus laevis (African clawed frog).